A 276-amino-acid chain; its full sequence is Pantothenate synthetase (276 aa).

Residue 27–34 (MGALHRGH) participates in ATP binding. His34 acts as the Proton donor in catalysis. A (R)-pantoate-binding site is contributed by Gln58. Gln58 contributes to the beta-alanine binding site. 147 to 150 (GKKD) provides a ligand contact to ATP. (R)-pantoate is bound at residue Gln153. Residues Ala176 and 184–187 (LSSR) each bind ATP.

It belongs to the pantothenate synthetase family. As to quaternary structure, homodimer.

It is found in the cytoplasm. It carries out the reaction (R)-pantoate + beta-alanine + ATP = (R)-pantothenate + AMP + diphosphate + H(+). Its pathway is cofactor biosynthesis; (R)-pantothenate biosynthesis; (R)-pantothenate from (R)-pantoate and beta-alanine: step 1/1. Functionally, catalyzes the condensation of pantoate with beta-alanine in an ATP-dependent reaction via a pantoyl-adenylate intermediate. The chain is Pantothenate synthetase from Helicobacter pylori (strain P12).